Consider the following 147-residue polypeptide: Lectin-like protein BA14k (147 aa).

The first 26 residues, 1–26 (MNSFRKTCAGALALIFGATSIVPTVA), serve as a signal peptide directing secretion. The helical transmembrane segment at 80–100 (GWWYPLAAFGAGAIIGGAISQ) threads the bilayer.

Belongs to the BA14k family.

It localises to the cell membrane. In terms of biological role, has immunoglobulin-binding and hemagglutination properties, and can bind to mannose. Essential for virulence. May be involved in LPS biosynthesis or polysaccharide transport. The chain is Lectin-like protein BA14k from Brucella abortus (strain S19).